The sequence spans 560 residues: Mitogen-activated protein kinase kinase kinase 3 (560 aa).

The segment at lysine 70–threonine 91 is disordered. Residues tryptophan 303 to valine 557 form the Protein kinase domain. ATP is bound by residues leucine 309 to valine 317 and lysine 331. Aspartate 426 functions as the Proton acceptor in the catalytic mechanism.

The protein belongs to the protein kinase superfamily. STE Ser/Thr protein kinase family. MAP kinase kinase kinase subfamily. In terms of tissue distribution, expressed at low levels in roots, stems, siliques, leaves, seedlings and flower buds.

It carries out the reaction L-seryl-[protein] + ATP = O-phospho-L-seryl-[protein] + ADP + H(+). The enzyme catalyses L-threonyl-[protein] + ATP = O-phospho-L-threonyl-[protein] + ADP + H(+). This chain is Mitogen-activated protein kinase kinase kinase 3, found in Arabidopsis thaliana (Mouse-ear cress).